We begin with the raw amino-acid sequence, 143 residues long: uncharacterized protein (143 aa).

The interval 111–143 (VTQDISHTSGKSPTPKAKSSSPKKSKKKNWIPL) is disordered. Low complexity predominate over residues 119-130 (SGKSPTPKAKSS). The segment covering 131–143 (SPKKSKKKNWIPL) has biased composition (basic residues).

Belongs to the chlamydial CPn_0742/CT_635/TC_0003 family.

This is an uncharacterized protein from Chlamydia muridarum (strain MoPn / Nigg).